A 303-amino-acid polypeptide reads, in one-letter code: Putative S-adenosyl-L-methionine-dependent methyltransferase SCO6443 (303 aa).

S-adenosyl-L-methionine contacts are provided by residues D130 and D159–L160.

Belongs to the UPF0677 family.

Exhibits S-adenosyl-L-methionine-dependent methyltransferase activity. The chain is Putative S-adenosyl-L-methionine-dependent methyltransferase SCO6443 from Streptomyces coelicolor (strain ATCC BAA-471 / A3(2) / M145).